The sequence spans 715 residues: MDLGIPEFTCDVSLEDGKKPQPLQFSFTLYDLDGHGKITKDDIAGIVSTIYESIGKSVVVPHYGSKTINVRLTVSPDGKTKQTASAVKKAAITPRRRYRPRKLISDDDGSDTSENCPRVMRTRANTVVANTTINNNVKHKDNNVAKDEDVVDGLTKSSEAVETTFHNNLNGKGKTLNVKNDNIYESINNLKCCNIQAAQASKPTVALSQSPGTLNNSTATTVICRDCSLEGCTIDETLPLGTVVIPATTPAAAISSRAKRKVVRKSRSSRKASKLTDDFSRPRARSLSVGNENCYENMIGTTQEECWKSSLCRRELIEIIRDSMVKNSLCFQPNRKPLENSPKHRHRSHTIAARIGAEHCGETVMATQQALVAAHETNLCGYDSYLHQTICAAANANHAALHLNGGVVGNGGVFTALPLTTSTPNRLLQHHSHHAHAKAKRKEHRLAVATRSQVHHQVAQPVKLSTAVLNQQYPNLSAEQKLSRSINQVEKWLDNRSPKLVNKLKLAEEIAEKSPRVAAAKLKRSKSKEEITHKSTKFENVLTTDLLLDNLKITEDIAELSVVTPKKIFNKECLISSATKKNIRTHHTTKTVSTTTAVVPPAVDKASKNLIQLQYASVPINAELSECENLIRISDAEEELHQSVQQQQGTHQQQQQPQSSVSSPTHHHHHHAGASLLGENSGSSASAASTTAVHRYVHEHIHHHYHHFENDPDES.

An EF-hand domain is found at 18-53; it reads KKPQPLQFSFTLYDLDGHGKITKDDIAGIVSTIYES. A disordered region spans residues 256-282; it reads SRAKRKVVRKSRSSRKASKLTDDFSRP. Basic residues predominate over residues 257 to 273; sequence RAKRKVVRKSRSSRKAS. The interval 305 to 334 is required for nuclear localization and inhibition of Wnt signaling; it reads ECWKSSLCRRELIEIIRDSMVKNSLCFQPN. The interval 639 to 690 is disordered; the sequence is ELHQSVQQQQGTHQQQQQPQSSVSSPTHHHHHHAGASLLGENSGSSASAAST. Composition is skewed to low complexity over residues 642–664 and 673–690; these read QSVQ…VSSP and GASL…AAST.

It belongs to the NKD family.

The protein localises to the cell membrane. It localises to the cytoplasm. It is found in the nucleus. Its function is as follows. Cell autonomous antagonist of the canonical Wnt signaling pathway. May activate a second Wnt signaling pathway that controls planar cell polarity. Required for neuroblast specification. In Aedes aegypti (Yellowfever mosquito), this protein is Protein naked cuticle homolog.